The sequence spans 121 residues: Small ribosomal subunit protein uS13 (121 aa).

The tract at residues 89 to 121 (MRHRRGLPVRGQHTKNNARTRKGKAVSIAGKKK) is disordered.

This sequence belongs to the universal ribosomal protein uS13 family. In terms of assembly, part of the 30S ribosomal subunit. Forms a loose heterodimer with protein S19. Forms two bridges to the 50S subunit in the 70S ribosome.

Functionally, located at the top of the head of the 30S subunit, it contacts several helices of the 16S rRNA. In the 70S ribosome it contacts the 23S rRNA (bridge B1a) and protein L5 of the 50S subunit (bridge B1b), connecting the 2 subunits; these bridges are implicated in subunit movement. Contacts the tRNAs in the A and P-sites. The sequence is that of Small ribosomal subunit protein uS13 from Levilactobacillus brevis (strain ATCC 367 / BCRC 12310 / CIP 105137 / JCM 1170 / LMG 11437 / NCIMB 947 / NCTC 947) (Lactobacillus brevis).